The following is a 154-amino-acid chain: 6,7-dimethyl-8-ribityllumazine synthase (154 aa).

Residues Phe-22, 56-58, and 80-82 contribute to the 5-amino-6-(D-ribitylamino)uracil site; these read AFE and TVI. 85–86 is a binding site for (2S)-2-hydroxy-3-oxobutyl phosphate; that stretch reads AT. Catalysis depends on His-88, which acts as the Proton donor. Residue Phe-113 coordinates 5-amino-6-(D-ribitylamino)uracil. Arg-127 serves as a coordination point for (2S)-2-hydroxy-3-oxobutyl phosphate.

This sequence belongs to the DMRL synthase family. As to quaternary structure, forms an icosahedral capsid composed of 60 subunits, arranged as a dodecamer of pentamers.

The enzyme catalyses (2S)-2-hydroxy-3-oxobutyl phosphate + 5-amino-6-(D-ribitylamino)uracil = 6,7-dimethyl-8-(1-D-ribityl)lumazine + phosphate + 2 H2O + H(+). Its pathway is cofactor biosynthesis; riboflavin biosynthesis; riboflavin from 2-hydroxy-3-oxobutyl phosphate and 5-amino-6-(D-ribitylamino)uracil: step 1/2. Its function is as follows. Catalyzes the formation of 6,7-dimethyl-8-ribityllumazine by condensation of 5-amino-6-(D-ribitylamino)uracil with 3,4-dihydroxy-2-butanone 4-phosphate. This is the penultimate step in the biosynthesis of riboflavin. The protein is 6,7-dimethyl-8-ribityllumazine synthase of Bacillus pumilus (strain SAFR-032).